The following is a 1003-amino-acid chain: Calcium-transporting ATPase sarcoplasmic/endoplasmic reticulum type (1003 aa).

At 1 to 59 the chain is on the cytoplasmic side; the sequence is MEDAHAKKWEEVVDYFGVDPERGLALEQVKKNQEKYGPNELPAEEGKSLLTLILEQFDD. The chain crosses the membrane as a helical span at residues 60–78; sequence LLVKILLLAAIISLVLALF. The Extracellular portion of the chain corresponds to 79–89; that stretch reads EEHDDEAEQLT. Residues 90–110 form a helical membrane-spanning segment; that stretch reads AYVEPFVILLILIANAVVGVW. Residues 111–262 are Cytoplasmic-facing; the sequence is QEKNAESAIE…QQKLDEFGEQ (152 aa). The chain crosses the membrane as a helical span at residues 263–282; sequence LSKVISVICVAVWAINIGHF. Over 283–300 the chain is Extracellular; it reads NDPAHGGSWIKGAIYYFK. The chain crosses the membrane as a helical span at residues 301–318; the sequence is IAVALAVAAIPEGLPAVI. Over 319–775 the chain is Cytoplasmic; sequence TTCLALGTRR…RYLISSNIGE (457 aa). Residue Asp354 is the 4-aspartylphosphate intermediate of the active site. Residue Lys519 participates in ATP binding. A helical membrane pass occupies residues 776 to 799; the sequence is VVSIFLTAALGLPEALIPVQLLWV. The Extracellular portion of the chain corresponds to 800–840; sequence NLVTDGLPATALGFNPPDLDIMNKPPRRADEGLITGWLFFR. A helical transmembrane segment spans residues 841–863; it reads YMAIGTYVGAATVGAAAHWFMMS. At 864-898 the chain is on the cytoplasmic side; it reads PTGPGLNFYQLSHHLQCTPENEYFEGIDCEIFSDP. A helical membrane pass occupies residues 899–917; that stretch reads HPMTMALSVLVTIEMLNAI. Over 918 to 934 the chain is Extracellular; that stretch reads NSLSENQSLLVMPPWSN. The helical transmembrane segment at 935–954 threads the bilayer; sequence IWLISAICLSMTLHFVILYV. The Cytoplasmic segment spans residues 955–1003; sequence EILSTVFQICPLTLTEWIVVLKISFPVLLLDEVLKFVARKYTDEFSFIK.

The protein belongs to the cation transport ATPase (P-type) (TC 3.A.3) family.

The protein localises to the sarcoplasmic reticulum membrane. The catalysed reaction is Ca(2+)(in) + ATP + H2O = Ca(2+)(out) + ADP + phosphate + H(+). Functionally, this magnesium-dependent enzyme catalyzes the hydrolysis of ATP coupled with the transport of the calcium. The polypeptide is Calcium-transporting ATPase sarcoplasmic/endoplasmic reticulum type (Artemia franciscana (Brine shrimp)).